Here is a 133-residue protein sequence, read N- to C-terminus: MSMSDPIGDMLTRIRNAGRAKHDTCLVPGSKIKKSILDLMKEEGFIRDYESVKVNETFEDYKVFLKYDQTKRPIIRELIRVSTPGRRVYIKSTEIRPYKNNIGTLIVSTSKGIMTGKNARKLKLGGEVILKMS.

This sequence belongs to the universal ribosomal protein uS8 family. Part of the 30S ribosomal subunit. Contacts proteins S5 and S12.

Its function is as follows. One of the primary rRNA binding proteins, it binds directly to 16S rRNA central domain where it helps coordinate assembly of the platform of the 30S subunit. The polypeptide is Small ribosomal subunit protein uS8 (Leptospira borgpetersenii serovar Hardjo-bovis (strain JB197)).